The following is a 524-amino-acid chain: Zinc finger protein GLIS2 (524 aa).

An interaction with CTNND1 region spans residues 35–174 (ALHRELGLVD…PKQLVCRWAK (140 aa)). 2 disordered regions span residues 39–62 (ELGL…FLLN) and 84–114 (SPPS…VPSA). The tract at residues 71 to 137 (GRFSAAPLVD…SSFQFFLPLG (67 aa)) is transcription activation. Over residues 84–100 (SPPSGLDSPNGSSSLSP) the composition is skewed to low complexity. The transcription repression stretch occupies residues 148 to 171 (SFLTPPKDKCLSPDLPLPKQLVCR). Residues 168-193 (LVCRWAKCNQLFELLQDLVDHVNDYH) form a C2H2-type 1 zinc finger. A C2H2-type 2; atypical zinc finger spans residues 202–229 (YCCHWEGCARHGRGFNARYKMLIHIRTH). C2H2-type zinc fingers lie at residues 235–257 (HRCP…NRSH), 263–287 (YVCP…TRTH), and 293–317 (YYCK…IKAH). The disordered stretch occupies residues 439 to 480 (GGKAEGEKGRGSVPTRALGMEGHKTPLERTESSCSRPSPDGL). Positions 459–469 (EGHKTPLERTE) are enriched in basic and acidic residues.

This sequence belongs to the GLI C2H2-type zinc-finger protein family. As to quaternary structure, interacts with CTBP1 and HDAC3. Interacts with CTNNB1. Interacts with SUFU. Interacts with CTNND1. In terms of processing, C-terminus cleavage is induced by interaction with CTNND1 and enhanced by Src tyrosine kinase. As to expression, expressed at high levels in kidney and at low levels in heart, lung and placenta. Expressed in colon.

It localises to the nucleus speckle. The protein localises to the cytoplasm. In terms of biological role, can act either as a transcriptional repressor or as a transcriptional activator, depending on the cell context. Acts as a repressor of the Hedgehog signaling pathway. Represses the Hedgehog-dependent expression of Wnt4. Necessary to maintain the differentiated epithelial phenotype in renal cells through the inhibition of SNAI1, which itself induces the epithelial-to-mesenchymal transition. Represses transcriptional activation mediated by CTNNB1 in the Wnt signaling pathway. May act by recruiting the corepressors CTBP1 and HDAC3. May be involved in neuron differentiation. The chain is Zinc finger protein GLIS2 (GLIS2) from Homo sapiens (Human).